An 852-amino-acid chain; its full sequence is Tiger protein I3 (852 aa).

The signal sequence occupies residues 1–18 (MKILLFFILFYLFSFSIS). At 19–830 (YDEVIPLGYE…DVHQYSDARN (812 aa)) the chain is on the extracellular side. Asn-31, Asn-47, Asn-67, Asn-97, Asn-129, Asn-201, Asn-215, Asn-228, Asn-260, Asn-323, Asn-352, Asn-356, Asn-404, Asn-441, Asn-476, Asn-483, Asn-501, Asn-512, Asn-574, Asn-592, Asn-635, Asn-658, Asn-661, Asn-679, Asn-680, Asn-723, Asn-757, Asn-761, Asn-773, Asn-785, and Asn-800 each carry an N-linked (GlcNAc...) asparagine glycan. The 78-residue stretch at 290-367 (IPSIVNSIPK…SSPIAVSIND (78 aa)) folds into the IPT/TIG domain. The helical transmembrane segment at 831–851 (IFQNLLLSILIIIIISLFISN) threads the bilayer. Residue Ile-852 is a topological domain, cytoplasmic.

It localises to the membrane. This chain is Tiger protein I3 (tgrI3), found in Dictyostelium discoideum (Social amoeba).